Reading from the N-terminus, the 511-residue chain is Exodeoxyribonuclease 7 large subunit (511 aa).

It belongs to the XseA family. In terms of assembly, heterooligomer composed of large and small subunits.

Its subcellular location is the cytoplasm. The enzyme catalyses Exonucleolytic cleavage in either 5'- to 3'- or 3'- to 5'-direction to yield nucleoside 5'-phosphates.. Bidirectionally degrades single-stranded DNA into large acid-insoluble oligonucleotides, which are then degraded further into small acid-soluble oligonucleotides. The sequence is that of Exodeoxyribonuclease 7 large subunit from Brucella suis biovar 1 (strain 1330).